The sequence spans 188 residues: dCTP deaminase (188 aa).

Residues 111 to 116, 135 to 137, Gln156, Tyr170, and Gln180 each bind dCTP; these read KSTYAR and TLE. Glu137 (proton donor/acceptor) is an active-site residue.

This sequence belongs to the dCTP deaminase family. In terms of assembly, homotrimer.

It carries out the reaction dCTP + H2O + H(+) = dUTP + NH4(+). It functions in the pathway pyrimidine metabolism; dUMP biosynthesis; dUMP from dCTP (dUTP route): step 1/2. In terms of biological role, catalyzes the deamination of dCTP to dUTP. In Neisseria gonorrhoeae (strain ATCC 700825 / FA 1090), this protein is dCTP deaminase.